A 242-amino-acid polypeptide reads, in one-letter code: D-proline reductase subunit gamma (242 aa).

Selenocysteine 152 (nucleophile) is an active-site residue. Selenocysteine 152 is a non-standard amino acid (selenocysteine).

Consists of 3 subunits of 23, 26 and 45 kDa (alpha, gamma and beta respectively). The molecular weight of the complex is approximately 870 kDa, suggesting a decameric structure, if all 3 subunits are present in equal stoichiometry. In terms of processing, this subunit is carbonylated in vitro on an unidentified residue.

It localises to the cytoplasm. The enzyme catalyses [PrdC protein]-Se-L-selenocysteinyl-S-L-cysteine + 5-aminopentanoate = [PrdC protein]-L-selenocysteine/L-cysteine + D-proline. D-proline reductase catalyzes the reductive cleavage of a C-N bond in D-proline resulting in the formation of 5-aminovalerate. The alpha subunit has been shown to bind D-proline, presumably via the pyruvoyl group. The chain is D-proline reductase subunit gamma (prdB) from Acetoanaerobium sticklandii (strain ATCC 12662 / DSM 519 / JCM 1433 / CCUG 9281 / NCIMB 10654 / HF) (Clostridium sticklandii).